The following is a 603-amino-acid chain: F-box only protein 46 (603 aa).

The interval 18-54 (SKYSQNQPRPPSTALKPPVCPDTSSGTEPDHRPAHLE) is disordered. Residues S21 and S67 each carry the phosphoserine modification. Disordered regions lie at residues 113-165 (SRAS…SSGD), 235-301 (EAQR…TRAK), 332-359 (EASE…ARDC), and 412-442 (QSRG…GTTD). T347 is modified (phosphothreonine). 2 stretches are compositionally biased toward pro residues: residues 347-356 (TPPAPPPPPA) and 417-426 (EGPPEPPPAD). One can recognise an F-box domain in the interval 470-522 (RQYMLLLPEHVLVKIFSFLPTRALAALKCTCHHFKGIIEAFGVRATDSRWSRD).

Part of a SCF (SKP1-cullin-F-box) protein ligase complex SCF(FBXO46) composed of CUL1, SKP1, RBX1 and FBXO46. Phosphorylated by ATM in response to DNA damage, promoting ubiquitination and degradation by the SCF(FBXO31) complex. In terms of processing, ATM-phosphorylated FBXO46 is ubiquitinated and degradaded by the SCF(FBXO31) complex in response to DNA damage.

The protein operates within protein modification; protein ubiquitination. Its function is as follows. Substrate-recognition component of the SCF(FBXO46) protein ligase complex, which mediates the ubiquitination and degradation of target proteins. In absence of stress, the SCF(FBXO46) complex catalyzes ubiquitination and degradation of MTOR-phosphorylated FBXO31. The polypeptide is F-box only protein 46 (Fbxo46) (Mus musculus (Mouse)).